Consider the following 181-residue polypeptide: Acireductone dioxygenase (181 aa).

Fe(2+)-binding residues include His98, His100, Glu104, and His142. Residues His98, His100, Glu104, and His142 each contribute to the Ni(2+) site.

The protein belongs to the acireductone dioxygenase (ARD) family. Monomer. Fe(2+) serves as cofactor. It depends on Ni(2+) as a cofactor.

It carries out the reaction 1,2-dihydroxy-5-(methylsulfanyl)pent-1-en-3-one + O2 = 3-(methylsulfanyl)propanoate + CO + formate + 2 H(+). It catalyses the reaction 1,2-dihydroxy-5-(methylsulfanyl)pent-1-en-3-one + O2 = 4-methylsulfanyl-2-oxobutanoate + formate + 2 H(+). It participates in amino-acid biosynthesis; L-methionine biosynthesis via salvage pathway; L-methionine from S-methyl-5-thio-alpha-D-ribose 1-phosphate: step 5/6. In terms of biological role, catalyzes 2 different reactions between oxygen and the acireductone 1,2-dihydroxy-3-keto-5-methylthiopentene (DHK-MTPene) depending upon the metal bound in the active site. Fe-containing acireductone dioxygenase (Fe-ARD) produces formate and 2-keto-4-methylthiobutyrate (KMTB), the alpha-ketoacid precursor of methionine in the methionine recycle pathway. Ni-containing acireductone dioxygenase (Ni-ARD) produces methylthiopropionate, carbon monoxide and formate, and does not lie on the methionine recycle pathway. This is Acireductone dioxygenase from Synechococcus sp. (strain ATCC 27144 / PCC 6301 / SAUG 1402/1) (Anacystis nidulans).